Here is a 796-residue protein sequence, read N- to C-terminus: Disintegrin and metalloproteinase domain-containing protein B (796 aa).

The first 23 residues, 1–23 (MKALSCLLAVIATAGSLFQHVDA), serve as a signal peptide directing secretion. Residues 24–706 (RSHARDRLNN…VSDWVSRHKP (683 aa)) lie on the Extracellular side of the membrane. N-linked (GlcNAc...) asparagine glycans are attached at residues asparagine 33, asparagine 226, asparagine 313, and asparagine 407. In terms of domain architecture, Peptidase M12B spans 271-510 (RVALIGVVAD…HSILTNCLTT (240 aa)). 3 disulfide bridges follow: cysteine 395–cysteine 495, cysteine 448–cysteine 459, and cysteine 580–cysteine 600. A Zn(2+)-binding site is contributed by histidine 431. Residue glutamate 432 is part of the active site. Residues histidine 435 and histidine 441 each coordinate Zn(2+). Positions 519 to 608 (GQQCGNGIVE…DCPRDTHSKN (90 aa)) constitute a Disintegrin domain. A helical membrane pass occupies residues 707–727 (IVIGVAVGVGCLLLLAILSCI). At 728 to 796 (CGRSKKRRPR…PGRMPSTRYA (69 aa)) the chain is on the cytoplasmic side. The segment at 737 to 796 (RNRKMAPINMRPMPPVYNGWTGPPPNAESPGGHPQYNHVPPPINAPPPAYPGRMPSTRYA) is disordered. The segment covering 775 to 786 (VPPPINAPPPAY) has biased composition (pro residues).

Zn(2+) is required as a cofactor.

The protein localises to the membrane. Its function is as follows. Probable zinc protease. This is Disintegrin and metalloproteinase domain-containing protein B (ADM-B) from Arthroderma otae (strain ATCC MYA-4605 / CBS 113480) (Microsporum canis).